Consider the following 1595-residue polypeptide: A disintegrin and metalloproteinase with thrombospondin motifs 7 (1595 aa).

Positions 1–20 (MHRGLNLLLILCALAPHVLG) are cleaved as a signal peptide. Residues 21-217 (PASGLPTEGR…QRQQKRRQQR (197 aa)) constitute a propeptide that is removed on maturation. Asn-84 and Asn-105 each carry an N-linked (GlcNAc...) asparagine glycan. Positions 165–218 (PGHAQPHMVYKHKRSGQQDDSRTSGTCGVQGSPELKHQREHWEQRQQKRRQQRS) are disordered. The Cysteine switch motif lies at 189 to 196 (GTCGVQGS). Cys-191 contacts Zn(2+). A compositionally biased stretch (basic and acidic residues) spans 198–210 (ELKHQREHWEQRQ). Residues 223–434 (KWVETLVVAD…GWGLCLDDRP (212 aa)) enclose the Peptidase M12B domain. 11 disulfide bridges follow: Cys-299–Cys-353, Cys-328–Cys-335, Cys-347–Cys-429, Cys-386–Cys-413, Cys-456–Cys-479, Cys-467–Cys-485, Cys-474–Cys-504, Cys-498–Cys-509, Cys-532–Cys-569, Cys-536–Cys-574, and Cys-547–Cys-559. His-369 is a binding site for Zn(2+). The active site involves Glu-370. 2 residues coordinate Zn(2+): His-373 and His-379. The 76-residue stretch at 444–519 (VLPGVLYDVN…VPEGFQPETV (76 aa)) folds into the Disintegrin domain. A TSP type-1 1 domain is found at 520-575 (DGGWSGWSAWSVCSRSCGVGVRSSERQCTQPVPKNKGKYCVGERKRYRLCNLQACP). N-linked (GlcNAc...) asparagine glycosylation occurs at Asn-619. The tract at residues 680 to 791 (HTVSRTFKEA…PGVHYKYTIQ (112 aa)) is spacer. TSP type-1 domains lie at 801-860 (PEFS…EPCP), 861-917 (ARWW…IPCY), and 922-975 (CPSS…QPCQ). 4 disordered regions span residues 989–1035 (GSSS…LDPP), 1077–1121 (PPHI…SHSP), 1179–1234 (REDT…LSPD), and 1255–1315 (KPVH…APTD). Composition is skewed to pro residues over residues 1005–1015 (QPVPRPSPASS) and 1079–1089 (HIRPTEPPSDS). Over residues 1220 to 1232 (SSPSNSTTQASLS) the composition is skewed to low complexity. Polar residues predominate over residues 1268-1280 (QIQTPHTEGTQSP). 4 consecutive TSP type-1 domains span residues 1320–1368 (KNAS…RHCH), 1371–1431 (PCAA…QPCL), 1433–1476 (WYTS…PCNT), and 1478–1538 (PCTQ…EDCE). The region spanning 1541 to 1581 (EPSRCERDRLPFNFCETLRLLGRCQLPTIRAQCCRSCPPLS) is the PLAC domain.

As to quaternary structure, interacts with COMP. Zn(2+) serves as cofactor. In terms of processing, glycosylated. Can be O-fucosylated by POFUT2 on a serine or a threonine residue found within the consensus sequence C1-X(2)-(S/T)-C2-G of the TSP type-1 repeat domains where C1 and C2 are the first and second cysteine residue of the repeat, respectively. Fucosylated repeats can then be further glycosylated by the addition of a beta-1,3-glucose residue by the glucosyltransferase, B3GALTL. Fucosylation mediates the efficient secretion of ADAMTS family members. Can also be C-glycosylated with one or two mannose molecules on tryptophan residues within the consensus sequence W-X-X-W of the TPRs. N- and C-glycosylations can also facilitate secretion. O-glycosylated proteoglycan; contains chondroitin sulfate. Post-translationally, may be cleaved by a furin endopeptidase. The precursor is sequentially processed. As to expression, detected in liver, ovary, kidney, testicle, lung and embryo.

The protein localises to the secreted. It is found in the extracellular space. The protein resides in the extracellular matrix. In terms of biological role, metalloprotease. Was previously shown to degrade COMP. However, a later study found no activity against COMP. This chain is A disintegrin and metalloproteinase with thrombospondin motifs 7 (Adamts7), found in Rattus norvegicus (Rat).